A 290-amino-acid chain; its full sequence is Elongation factor Ts (290 aa).

An involved in Mg(2+) ion dislocation from EF-Tu region spans residues 81-84; it reads TDFV.

Belongs to the EF-Ts family.

It is found in the cytoplasm. In terms of biological role, associates with the EF-Tu.GDP complex and induces the exchange of GDP to GTP. It remains bound to the aminoacyl-tRNA.EF-Tu.GTP complex up to the GTP hydrolysis stage on the ribosome. This Saccharophagus degradans (strain 2-40 / ATCC 43961 / DSM 17024) protein is Elongation factor Ts.